Consider the following 122-residue polypeptide: MAASVDLELKKAFTELQAKVIDTQQKVKLADIQIEQLNRTKKHAHLTDTEIMTLVDETNMYEGVGRMFILQSKEVIHNQLLEKQKIAKEKIKELEQKKSYLERSVKEAEDNIREMLMARRAQ.

N-acetylalanine is present on Ala2.

This sequence belongs to the prefoldin subunit beta family. As to quaternary structure, heterohexamer of two PFD-alpha type and four PFD-beta type subunits.

In terms of biological role, binds specifically to cytosolic chaperonin (c-CPN) and transfers target proteins to it. Binds to nascent polypeptide chain and promotes folding in an environment in which there are many competing pathways for nonnative proteins. In Mus musculus (Mouse), this protein is Prefoldin subunit 1 (Pfdn1).